Here is a 329-residue protein sequence, read N- to C-terminus: Ubiquitin carboxyl-terminal hydrolase isozyme L5 (329 aa).

One can recognise a UCH catalytic domain in the interval 7 to 225; the sequence is EWCLMESDPG…IRFNLMAIVS (219 aa). The residue at position 47 (Lys47) is an N6-succinyllysine. Cys88 acts as the Nucleophile in catalysis. Lys158 bears the N6-acetyllysine mark. The active-site Proton donor is His164. Lys289 is subject to N6-succinyllysine. In terms of domain architecture, ULD spans 291–319; that stretch reads NYLPFIMELLKTLAEHQQLIPLVEKAKEK. The interaction with ADRM1 stretch occupies residues 313-329; that stretch reads VEKAKEKQNAKKAQETK.

This sequence belongs to the peptidase C12 family. As to quaternary structure, component of the 19S (PA700) regulatory complex of the 26S proteasome. Interacts with ADRM1 and NFRKB. Component of the INO80 complex; specifically part of a complex module associated with N-terminus of INO80.

The protein localises to the cytoplasm. The protein resides in the nucleus. The enzyme catalyses Thiol-dependent hydrolysis of ester, thioester, amide, peptide and isopeptide bonds formed by the C-terminal Gly of ubiquitin (a 76-residue protein attached to proteins as an intracellular targeting signal).. Activated by ADRM1. Inhibited by interaction with NFRKB. Functionally, protease that specifically cleaves 'Lys-48'-linked polyubiquitin chains. Deubiquitinating enzyme associated with the 19S regulatory subunit of the 26S proteasome. Putative regulatory component of the INO80 complex; however is inactive in the INO80 complex and is activated by a transient interaction of the INO80 complex with the proteasome via ADRM1. The polypeptide is Ubiquitin carboxyl-terminal hydrolase isozyme L5 (Uchl5) (Mus musculus (Mouse)).